Consider the following 34-residue polypeptide: Somatostatin (34 aa).

Residues 1–20 (AVERPRQDGQVHEPPGRERK) are disordered. Cys-23 and Cys-34 are oxidised to a cystine.

The protein belongs to the somatostatin family.

It is found in the secreted. Its function is as follows. Somatostatin inhibits the release of somatotropin. The sequence is that of Somatostatin (sst) from Myxine glutinosa (Atlantic hagfish).